A 274-amino-acid chain; its full sequence is Rhamnulose-1-phosphate aldolase (274 aa).

E117 is a catalytic residue. Zn(2+) contacts are provided by H141, H143, and H212.

This sequence belongs to the aldolase class II family. RhaD subfamily. As to quaternary structure, homotetramer. The cofactor is Zn(2+).

The protein localises to the cytoplasm. It carries out the reaction L-rhamnulose 1-phosphate = (S)-lactaldehyde + dihydroxyacetone phosphate. It participates in carbohydrate degradation; L-rhamnose degradation; glycerone phosphate from L-rhamnose: step 3/3. Catalyzes the reversible cleavage of L-rhamnulose-1-phosphate to dihydroxyacetone phosphate (DHAP) and L-lactaldehyde. The protein is Rhamnulose-1-phosphate aldolase of Yersinia pseudotuberculosis serotype I (strain IP32953).